A 331-amino-acid chain; its full sequence is Laforin (331 aa).

A CBM20 domain is found at 1–124; the sequence is MRFRFGVVVP…NNLVDGVYCL (124 aa). The residue at position 25 (Ser25) is a Phosphoserine; by AMPK. Residues Trp32, Lys87, 103–107, Asp197, Asp235, and Arg241 each bind substrate; that span reads GPHHD. Positions 156–323 constitute a Tyrosine-protein phosphatase domain; the sequence is HYSRILPNIW…QEDFFQKFGK (168 aa). The active-site Phosphocysteine intermediate is Cys266. Residues 266 to 272 carry the Glucan phosphatase signature motif CXAGXGR motif; the sequence is CNAGVGR. Residues 267-272 and Tyr304 contribute to the substrate site; that span reads NAGVGR.

The protein belongs to the protein-tyrosine phosphatase family. As to quaternary structure, homodimer. Interacts with itself. Interacts with PPP1R3B, PPP1R3C, PPP1R3D, HIRIP5, and EPM2AIP1. Binds glycogen and Lafora bodies. Interacts with NHLRC1/malin (via the NHL repeats). Forms a complex with NHLRC1/malin and HSP70. Interacts with PPP1R3D; in the presence of NHLC1/malin the interaction leads to ubiquitination and autophagic degradation of PPP1R3D. Interacts (via the phosphatase domain) with MAPT/Tau; the interaction dephosphorylates MAPT. Isoform 1 and isoform 2 interact to form a heterodimeric complex that lacks phosphatase activity (in vitro). Active phosphatase isoform 7 and isoform 1 interact with each other, but give rise to lower phosphatase activity than isoform 1 or isoform 7 by themselves (in vitro). Active phosphatase isoform 7 and inactive isoform 2 interact with each other, but give rise to lower phosphatase activity than isoform 7 by itself (in vitro). Interacts with PRDM8. Polyubiquitinated by NHLRC1/malin. In terms of processing, phosphorylation on Ser-25 by AMPK affects the phosphatase activity of the enzyme and its ability to homodimerize and interact with NHLRC1, PPP1R3C or PRKAA2. Expressed in heart, skeletal muscle, kidney, pancreas and brain. Isoform 4 is also expressed in the placenta.

It localises to the cytoplasm. Its subcellular location is the endoplasmic reticulum membrane. The protein resides in the cell membrane. It is found in the nucleus. It carries out the reaction O-phospho-L-tyrosyl-[protein] + H2O = L-tyrosyl-[protein] + phosphate. The catalysed reaction is O-phospho-L-seryl-[protein] + H2O = L-seryl-[protein] + phosphate. It catalyses the reaction O-phospho-L-threonyl-[protein] + H2O = L-threonyl-[protein] + phosphate. Functionally, plays an important role in preventing glycogen hyperphosphorylation and the formation of insoluble aggregates, via its activity as glycogen phosphatase, and by promoting the ubiquitination of proteins involved in glycogen metabolism via its interaction with the E3 ubiquitin ligase NHLRC1/malin. Shows strong phosphatase activity towards complex carbohydrates in vitro, avoiding glycogen hyperphosphorylation which is associated with reduced branching and formation of insoluble aggregates. Dephosphorylates phosphotyrosine and synthetic substrates, such as para-nitrophenylphosphate (pNPP), and has low activity with phosphoserine and phosphothreonine substrates (in vitro). Has been shown to dephosphorylate MAPT. Forms a complex with NHLRC1/malin and HSP70, which suppresses the cellular toxicity of misfolded proteins by promoting their degradation through the ubiquitin-proteasome system (UPS). Acts as a scaffold protein to facilitate PPP1R3C/PTG ubiquitination by NHLRC1/malin. Also promotes proteasome-independent protein degradation through the macroautophagy pathway. Its function is as follows. Does not bind to glycogen. Lacks phosphatase activity and might function as a dominant-negative regulator for the phosphatase activity of isoform 1 and isoform 7. Has phosphatase activity (in vitro). This chain is Laforin (EPM2A), found in Homo sapiens (Human).